The following is a 224-amino-acid chain: Heme response regulator HssR (224 aa).

Residues 3–116 (NCLIVDDDKK…ELLFRIKAVL (114 aa)) form the Response regulatory domain. Residue aspartate 52 is modified to 4-aspartylphosphate. Residues 124–222 (DNELQLGNLI…VRGQGYRVDQ (99 aa)) constitute a DNA-binding region (ompR/PhoB-type).

In terms of processing, phosphorylated by HssS.

It is found in the cytoplasm. In terms of biological role, member of the two-component regulatory system HssS/HssR involved in intracellular heme homeostasis and tempering of staphylococcal virulence. Phosphorylated HssR binds to a direct repeat sequence within hrtAB promoter and activates the expression of hrtAB, an efflux pump, in response to extracellular heme, hemin, hemoglobin or blood. The chain is Heme response regulator HssR (hssR) from Staphylococcus epidermidis (strain ATCC 35984 / DSM 28319 / BCRC 17069 / CCUG 31568 / BM 3577 / RP62A).